Reading from the N-terminus, the 341-residue chain is Glyceraldehyde-3-phosphate dehydrogenase 4 (341 aa).

NAD(+) is bound by residues 13–14, D35, and K85; that span reads RI. D-glyceraldehyde 3-phosphate contacts are provided by residues 157–159, T188, 217–218, and R240; these read SCT and TG. C158 serves as the catalytic Nucleophile. N322 lines the NAD(+) pocket.

Belongs to the glyceraldehyde-3-phosphate dehydrogenase family. Homotetramer.

The protein resides in the cytoplasm. It catalyses the reaction D-glyceraldehyde 3-phosphate + phosphate + NAD(+) = (2R)-3-phospho-glyceroyl phosphate + NADH + H(+). Its pathway is carbohydrate degradation; glycolysis; pyruvate from D-glyceraldehyde 3-phosphate: step 1/5. This chain is Glyceraldehyde-3-phosphate dehydrogenase 4 (gpd-4), found in Caenorhabditis elegans.